The primary structure comprises 594 residues: Shugoshin (594 aa).

The stretch at 38–61 forms a coiled coil; it reads KITDMETKVSELVQENVSLRSRLS. Disordered stretches follow at residues 104–178, 201–266, 342–380, and 519–549; these read SGIH…KSSR, QLPI…TNKN, SKIK…RRTR, and TKQQ…RTKQ. Residues 220–240 adopt a coiled-coil conformation; that stretch reads EEESQENKHTKEEREDEGKEN. Basic and acidic residues predominate over residues 224-239; sequence QENKHTKEEREDEGKE. Over residues 252–261 the composition is skewed to polar residues; that stretch reads SVTNTGTECS. Basic residues predominate over residues 343-355; sequence KIKHSMKHPRTKL. Residues 357–376 show a composition bias toward basic and acidic residues; sequence GGQDDIMPHTDYDKDDEKRE. Composition is skewed to polar residues over residues 519–532 and 539–549; these read TKQQ…SDPN and NSNVKPTRTKQ.

This sequence belongs to the shugoshin family.

It is found in the nucleus. The protein resides in the chromosome. The protein localises to the centromere. In terms of biological role, plays a central role in chromosome cohesion during cell division by preventing premature dissociation of cohesin complex from centromeres after prophase, when most of cohesin complex dissociates from chromosomes arms. The protein is Shugoshin (SGO1) of Kluyveromyces lactis (strain ATCC 8585 / CBS 2359 / DSM 70799 / NBRC 1267 / NRRL Y-1140 / WM37) (Yeast).